A 770-amino-acid chain; its full sequence is PH and SEC7 domain-containing protein 2 (770 aa).

The span at 1 to 24 (MDEEKLPCELHKEGSATQEDHGLE) shows a compositional bias: basic and acidic residues. 2 disordered regions span residues 1 to 65 (MDEE…RGPD) and 181 to 304 (IQQR…ANGC). A compositionally biased stretch (polar residues) spans 32–45 (QNGTAASEGLSSHI). Position 188 is a phosphoserine (Ser-188). Composition is skewed to low complexity over residues 216 to 234 (LGSP…NVLS) and 285 to 296 (ELSSSEGLEPGS). In terms of domain architecture, SEC7 spans 256–459 (DDEDDEDTDK…KTLYNSIKNE (204 aa)). Positions 509 to 622 (TTYKHGVLTR…WILRINLVAA (114 aa)) constitute a PH domain. The helical transmembrane segment at 619–636 (LVAAIFSAPAFPAAVSSM) threads the bilayer. Residues 650–677 (RLCQEEQLRSHENKLRQVTAELAEHRCH) are a coiled coil. A disordered region spans residues 738 to 770 (PALRKTHSSPALSLGHGPVTGSKATKDTSASDT).

It belongs to the PSD family.

Its subcellular location is the cell membrane. It localises to the cell projection. The protein resides in the ruffle membrane. It is found in the cleavage furrow. The polypeptide is PH and SEC7 domain-containing protein 2 (Psd2) (Mus musculus (Mouse)).